An 83-amino-acid polypeptide reads, in one-letter code: U5-theraphotoxin-Hs1a 1 (83 aa).

A signal peptide spans 1–21 (MKTSMFLTLTGLGLLFVVCYA). Residues 22–49 (SESEEKEFPKELLSSIFAADSDFKVEER) constitute a propeptide that is removed on maturation. 3 disulfide bridges follow: Cys-51/Cys-63, Cys-56/Cys-68, and Cys-62/Cys-75.

It belongs to the neurotoxin 10 (Hwtx-1) family. 51 (Hntx-8) subfamily. Hntx-8 sub-subfamily. As to expression, expressed by the venom gland.

It localises to the secreted. Agglutinates human and mice erythrocytes. This activity can be specifically inhibited by mannosamine. This lectin shows very low toxicity in both mammals and insects. This is U5-theraphotoxin-Hs1a 1 from Cyriopagopus schmidti (Chinese bird spider).